A 461-amino-acid polypeptide reads, in one-letter code: FAD-dependent monooxygenase nodY2 (461 aa).

Positions 48 and 136 each coordinate FAD. Arg214 is a catalytic residue. 2 residues coordinate FAD: Asp338 and Gly351.

The protein belongs to the paxM FAD-dependent monooxygenase family. It depends on FAD as a cofactor.

It functions in the pathway secondary metabolite biosynthesis. Its function is as follows. FAD-dependent monooxygenase; part of the gene cluster that mediates the biosynthesis of the indole diterpenes nodulisporic acids (NA). Nodulisporic acid A (NAA) and its chemically modified derivatives are of particular significance because of their highly potent insecticidal activity against blood-feeding arthropods and lack of observable adverse effects on mammals, in particular the tremogenicity associated with the paspaline-derived IDTs is not observed. The geranylgeranyl diphosphate (GGPP) synthase ggs1, localized outside of the cluster, is proposed to catalyze the first step in nodulisporic acid biosynthesis via conversion of farnesyl pyrophosphate and isopentyl pyrophosphate into geranylgeranyl pyrophosphate (GGPP). Condensation of indole-3-glycerol phosphate with GGPP by the prenyl transferase nodC then forms 3-geranylgeranylindole (3-GGI). Epoxidation by the FAD-dependent monooxygenase nodM leads to a single-epoxidized-GGI that is substrate of the terpene cyclase nodB for cyclization to yield emindole SB. The terminal methyl carbon, C28, of emindole SB is then oxidized by the cytochrome P450 monooxygenase nodW to produce nodulisporic acid F (NAF), the pentacyclic core of NAA. NAF is converted to nodulisporic acid E (NAE) via prenylation. This step is probably performed by one of the indole diterpene prenyltransferases nodD1 or nodD2. Several oxidation steps performed by the FAD-linked oxidoreductase nodO and one of the cytochrome P450 monooxygenase nodR, nodX or nodZ further convert NAE to nodulisporic acid D (NAD). NAD is substrate of cytochrome P450 monooxygenase nodJ to produce the precursor of nodulisporic acid C (NAC), converted to NAC by one of the indole diterpene prenyltransferases nodD1 or nodD2. The FAD-dependent monooxygenase nodY2 then oxidizes NAC to nodulisporic acid B (NAB). Finally NAB is converted to NAA by one of the cytochrome P450 monooxygenases nodR, nodX or nodZ. The chain is FAD-dependent monooxygenase nodY2 from Hypoxylon pulicicidum.